Reading from the N-terminus, the 692-residue chain is E3 ubiquitin-protein ligase MARCHF7 (692 aa).

N-acetylmethionine is present on methionine 1. Disordered regions lie at residues 1-165 (MESK…SHRS), 201-280 (STNH…GRRT), 296-343 (FFSR…RASE), 360-425 (LSQN…HLFR), 440-474 (SLGA…RNTG), and 512-532 (SSAD…PEKL). Residues 37–48 (YHSRDSSFRLDS) show a composition bias toward basic and acidic residues. Composition is skewed to polar residues over residues 61–83 (PYQS…SQNQ) and 95–132 (SCTN…SSMV). Residues 140-153 (LMRERRDLERRRDS) show a composition bias toward basic and acidic residues. Residues 201–214 (STNHQLPSEHQTVP) are compositionally biased toward polar residues. Residues 215–233 (SSRDSSRSSFRSHFSPRQS) are compositionally biased toward low complexity. Residues 235–272 (SFRNSSHPAFSYLSSRNETPTISSSERAGSSQRPFQES) show a composition bias toward polar residues. Residues 296-305 (FFSRRSSQDS) show a composition bias toward low complexity. Positions 306–336 (LNTRSLSSENYISPRTLTSQSRNNGASSSEV) are enriched in polar residues. 2 positions are modified to phosphoserine: serine 318 and serine 389. Residues 450 to 462 (ASGASGNASASGS) are compositionally biased toward low complexity. Positions 516 to 532 (GKSEKAKSAPSRDPEKL) are enriched in basic and acidic residues. The segment at 545–615 (DEEEEGDLCR…ELCKEKLQLN (71 aa)) adopts an RING-CH-type zinc-finger fold. Zn(2+)-binding residues include cysteine 553, cysteine 556, cysteine 571, cysteine 573, histidine 581, cysteine 584, cysteine 605, and cysteine 608. Threonine 687 is subject to Phosphothreonine. Phosphoserine is present on serine 688.

It localises to the cytoplasm. It catalyses the reaction S-ubiquitinyl-[E2 ubiquitin-conjugating enzyme]-L-cysteine + [acceptor protein]-L-lysine = [E2 ubiquitin-conjugating enzyme]-L-cysteine + N(6)-ubiquitinyl-[acceptor protein]-L-lysine.. It functions in the pathway protein modification; protein ubiquitination. E3 ubiquitin-protein ligase which may specifically enhance the E2 activity of HIP2. E3 ubiquitin ligases accept ubiquitin from an E2 ubiquitin-conjugating enzyme in the form of a thioester and then directly transfer the ubiquitin to targeted substrates. May be involved in T-cell proliferation by regulating LIF secretion. May play a role in lysosome homeostasis. Promotes 'Lys-6', 'Lys-11' and 'Lys-63'-linked mixed polyubiquitination on ATG14 leading to the inhibition of autophagy by impairing the interaction between ATG14 and STX7. Participates in the dopamine-mediated negative regulation of the NLRP3 inflammasome by promoting its uibiquitination and subsequent degradation. This chain is E3 ubiquitin-protein ligase MARCHF7 (Marchf7), found in Rattus norvegicus (Rat).